Here is a 264-residue protein sequence, read N- to C-terminus: MKTYLDLLSHVLNKGIDRTDRTGVGTRSVFGYQMRFDLQIGFPLLTTKKLHLRSIIYELLWFLRGDTNVAWLKEHGVSIWDEWADEKGNLGPIYGYQWRSWPASDGRYIDQISRLLTMIKKTPDSRRLIVSAWNPALIEEMALPPCHCFFQFYVADDKLSCQLYQRSADIFLGVPFNIASYALLTMMIAQVSGLKAGDFIHTLGDAHLYSNHFEQARYQLSRIPNALPSMLINPSVTDLFSFKFEDFELLNYEAQPHIKAPVAV.

A dUMP-binding site is contributed by arginine 21. (6R)-5,10-methylene-5,6,7,8-tetrahydrofolate is bound at residue histidine 51. Residue 126–127 (RR) coordinates dUMP. The Nucleophile role is filled by cysteine 146. DUMP contacts are provided by residues 166 to 169 (RSAD), asparagine 177, and 207 to 209 (HLY). Aspartate 169 provides a ligand contact to (6R)-5,10-methylene-5,6,7,8-tetrahydrofolate. Alanine 263 lines the (6R)-5,10-methylene-5,6,7,8-tetrahydrofolate pocket.

The protein belongs to the thymidylate synthase family. Bacterial-type ThyA subfamily. Homodimer.

Its subcellular location is the cytoplasm. It carries out the reaction dUMP + (6R)-5,10-methylene-5,6,7,8-tetrahydrofolate = 7,8-dihydrofolate + dTMP. It functions in the pathway pyrimidine metabolism; dTTP biosynthesis. Functionally, catalyzes the reductive methylation of 2'-deoxyuridine-5'-monophosphate (dUMP) to 2'-deoxythymidine-5'-monophosphate (dTMP) while utilizing 5,10-methylenetetrahydrofolate (mTHF) as the methyl donor and reductant in the reaction, yielding dihydrofolate (DHF) as a by-product. This enzymatic reaction provides an intracellular de novo source of dTMP, an essential precursor for DNA biosynthesis. The polypeptide is Thymidylate synthase (Bartonella quintana (strain Toulouse) (Rochalimaea quintana)).